We begin with the raw amino-acid sequence, 92 residues long: Large ribosomal subunit protein eL34 (92 aa).

The protein belongs to the eukaryotic ribosomal protein eL34 family.

The sequence is that of Large ribosomal subunit protein eL34 from Staphylothermus marinus (strain ATCC 43588 / DSM 3639 / JCM 9404 / F1).